The following is a 165-amino-acid chain: Phosphopantetheine adenylyltransferase (165 aa).

Position 9 (Thr-9) interacts with substrate. Residues 9-10 and His-17 contribute to the ATP site; that span reads TF. Substrate-binding residues include Lys-41, Leu-73, and Arg-87. Residues 88 to 90, Glu-98, and 123 to 129 each bind ATP; these read GLR and YQFISGT.

It belongs to the bacterial CoaD family. Homohexamer. The cofactor is Mg(2+).

The protein resides in the cytoplasm. The enzyme catalyses (R)-4'-phosphopantetheine + ATP + H(+) = 3'-dephospho-CoA + diphosphate. It functions in the pathway cofactor biosynthesis; coenzyme A biosynthesis; CoA from (R)-pantothenate: step 4/5. Functionally, reversibly transfers an adenylyl group from ATP to 4'-phosphopantetheine, yielding dephospho-CoA (dPCoA) and pyrophosphate. The sequence is that of Phosphopantetheine adenylyltransferase from Polynucleobacter necessarius subsp. necessarius (strain STIR1).